The chain runs to 64 residues: Large ribosomal subunit protein bL35 (64 aa).

This sequence belongs to the bacterial ribosomal protein bL35 family.

This is Large ribosomal subunit protein bL35 from Amoebophilus asiaticus (strain 5a2).